A 251-amino-acid chain; its full sequence is 1-(5-phosphoribosyl)-5-[(5-phosphoribosylamino)methylideneamino] imidazole-4-carboxamide isomerase (251 aa).

The active-site Proton acceptor is the D8. D131 serves as the catalytic Proton donor.

The protein belongs to the HisA/HisF family.

It is found in the cytoplasm. It catalyses the reaction 1-(5-phospho-beta-D-ribosyl)-5-[(5-phospho-beta-D-ribosylamino)methylideneamino]imidazole-4-carboxamide = 5-[(5-phospho-1-deoxy-D-ribulos-1-ylimino)methylamino]-1-(5-phospho-beta-D-ribosyl)imidazole-4-carboxamide. It functions in the pathway amino-acid biosynthesis; L-histidine biosynthesis; L-histidine from 5-phospho-alpha-D-ribose 1-diphosphate: step 4/9. In Thiobacillus denitrificans (strain ATCC 25259 / T1), this protein is 1-(5-phosphoribosyl)-5-[(5-phosphoribosylamino)methylideneamino] imidazole-4-carboxamide isomerase.